The following is a 208-amino-acid chain: Uracil phosphoribosyltransferase (208 aa).

Residues Arg78, Arg103, and 130–138 (DPMLATGGT) each bind 5-phospho-alpha-D-ribose 1-diphosphate. Residues Ile193 and 198–200 (GDA) each bind uracil. Asp199 lines the 5-phospho-alpha-D-ribose 1-diphosphate pocket.

It belongs to the UPRTase family. It depends on Mg(2+) as a cofactor.

The enzyme catalyses UMP + diphosphate = 5-phospho-alpha-D-ribose 1-diphosphate + uracil. It functions in the pathway pyrimidine metabolism; UMP biosynthesis via salvage pathway; UMP from uracil: step 1/1. With respect to regulation, allosterically activated by GTP. Its function is as follows. Catalyzes the conversion of uracil and 5-phospho-alpha-D-ribose 1-diphosphate (PRPP) to UMP and diphosphate. The chain is Uracil phosphoribosyltransferase from Desulfotalea psychrophila (strain LSv54 / DSM 12343).